The primary structure comprises 693 residues: Elongation factor G (693 aa).

A tr-type G domain is found at 8-282 (KNTRNIGIMA…AVIDYLPSPL (275 aa)). GTP contacts are provided by residues 17–24 (AHIDAGKT), 81–85 (DTPGH), and 135–138 (NKMD).

This sequence belongs to the TRAFAC class translation factor GTPase superfamily. Classic translation factor GTPase family. EF-G/EF-2 subfamily.

Its subcellular location is the cytoplasm. Functionally, catalyzes the GTP-dependent ribosomal translocation step during translation elongation. During this step, the ribosome changes from the pre-translocational (PRE) to the post-translocational (POST) state as the newly formed A-site-bound peptidyl-tRNA and P-site-bound deacylated tRNA move to the P and E sites, respectively. Catalyzes the coordinated movement of the two tRNA molecules, the mRNA and conformational changes in the ribosome. The protein is Elongation factor G of Staphylococcus intermedius.